A 952-amino-acid chain; its full sequence is Inter-alpha-trypsin inhibitor heavy chain H5 (952 aa).

The signal sequence occupies residues 1-17; the sequence is MLLLLGLCLGLPLFSES. The VIT domain maps to 35–161; it reads VPRQLRLLQR…KAAFFLSYEE (127 aa). 4 N-linked (GlcNAc...) asparagine glycosylation sites follow: Asn-97, Asn-127, Asn-136, and Asn-231. Residues 113–131 show a composition bias toward basic and acidic residues; that stretch reads QKDKKSSESVKDKRNRTSD. Residues 113 to 138 form a disordered region; it reads QKDKKSSESVKDKRNRTSDDNEENGS. The 184-residue stretch at 295 to 478 folds into the VWFA domain; the sequence is NVVFVLDISA…AQLIGFYDEI (184 aa). Residues Asn-508, Asn-776, Asn-795, and Asn-862 are each glycosylated (N-linked (GlcNAc...) asparagine). The disordered stretch occupies residues 933–952; that stretch reads ALGLSTPRKPETDRPHEESV. The segment covering 940–952 has biased composition (basic and acidic residues); that stretch reads RKPETDRPHEESV.

Belongs to the ITIH family.

The protein localises to the secreted. May act as a tumor suppressor. In Mus musculus (Mouse), this protein is Inter-alpha-trypsin inhibitor heavy chain H5 (Itih5).